Consider the following 1404-residue polypeptide: DNA-directed RNA polymerase subunit beta' (1404 aa).

4 residues coordinate Zn(2+): C60, C62, C75, and C78. The Mg(2+) site is built by D449, D451, and D453. C778, C852, C859, and C862 together coordinate Zn(2+). The disordered stretch occupies residues 1380–1404; sequence LDRPLEEEEEEEIPQAIAEESDAEE. Residues 1384 to 1404 are compositionally biased toward acidic residues; it reads LEEEEEEEIPQAIAEESDAEE.

This sequence belongs to the RNA polymerase beta' chain family. As to quaternary structure, the RNAP catalytic core consists of 2 alpha, 1 beta, 1 beta' and 1 omega subunit. When a sigma factor is associated with the core the holoenzyme is formed, which can initiate transcription. It depends on Mg(2+) as a cofactor. Zn(2+) is required as a cofactor.

It catalyses the reaction RNA(n) + a ribonucleoside 5'-triphosphate = RNA(n+1) + diphosphate. In terms of biological role, DNA-dependent RNA polymerase catalyzes the transcription of DNA into RNA using the four ribonucleoside triphosphates as substrates. The protein is DNA-directed RNA polymerase subunit beta' of Leptospira interrogans serogroup Icterohaemorrhagiae serovar Lai (strain 56601).